A 571-amino-acid chain; its full sequence is Urease subunit alpha (571 aa).

The Urease domain occupies 133-571; the sequence is GGIDTHVHFV…LPLTQRYFLF (439 aa). Ni(2+) is bound by residues H138, H140, and K221. An N6-carboxylysine modification is found at K221. H223 is a substrate binding site. The Ni(2+) site is built by H250 and H276. The active-site Proton donor is H324. Ni(2+) is bound at residue D364.

Belongs to the metallo-dependent hydrolases superfamily. Urease alpha subunit family. Heterotrimer of UreA (gamma), UreB (beta) and UreC (alpha) subunits. Three heterotrimers associate to form the active enzyme. Requires Ni cation as cofactor. Carboxylation allows a single lysine to coordinate two nickel ions.

The protein localises to the cytoplasm. It catalyses the reaction urea + 2 H2O + H(+) = hydrogencarbonate + 2 NH4(+). It participates in nitrogen metabolism; urea degradation; CO(2) and NH(3) from urea (urease route): step 1/1. The sequence is that of Urease subunit alpha from Staphylococcus xylosus.